A 105-amino-acid polypeptide reads, in one-letter code: MVNVPKTRRTFCDGKCRRHTMHKVTQYKKGKESRLAQGRRRYDSKQKGFGGQTKPIFRKKAKTTKKIVLRMECTECKHRKQLPIKRCKHFELGGQKKTRGQVIQF.

A disordered region spans residues 23–52 (KVTQYKKGKESRLAQGRRRYDSKQKGFGGQ). The span at 29-46 (KGKESRLAQGRRRYDSKQ) shows a compositional bias: basic and acidic residues.

Belongs to the eukaryotic ribosomal protein eL42 family.

This chain is Large ribosomal subunit protein eL42 (rpl-44), found in Brugia malayi (Filarial nematode worm).